Consider the following 392-residue polypeptide: Formate-dependent phosphoribosylglycinamide formyltransferase (392 aa).

N(1)-(5-phospho-beta-D-ribosyl)glycinamide is bound by residues 22 to 23 (EL) and Glu82. Residues Arg114, Lys155, 160-165 (SSGKGQ), 195-198 (EGVV), and Glu203 each bind ATP. Positions 119–308 (RLAAEELQLP…EFALHVRAFL (190 aa)) constitute an ATP-grasp domain. Mg(2+) contacts are provided by Glu267 and Glu279. Residues Asp286, Lys355, and 362 to 363 (RR) contribute to the N(1)-(5-phospho-beta-D-ribosyl)glycinamide site.

The protein belongs to the PurK/PurT family. Homodimer.

It carries out the reaction N(1)-(5-phospho-beta-D-ribosyl)glycinamide + formate + ATP = N(2)-formyl-N(1)-(5-phospho-beta-D-ribosyl)glycinamide + ADP + phosphate + H(+). It participates in purine metabolism; IMP biosynthesis via de novo pathway; N(2)-formyl-N(1)-(5-phospho-D-ribosyl)glycinamide from N(1)-(5-phospho-D-ribosyl)glycinamide (formate route): step 1/1. Functionally, involved in the de novo purine biosynthesis. Catalyzes the transfer of formate to 5-phospho-ribosyl-glycinamide (GAR), producing 5-phospho-ribosyl-N-formylglycinamide (FGAR). Formate is provided by PurU via hydrolysis of 10-formyl-tetrahydrofolate. The sequence is that of Formate-dependent phosphoribosylglycinamide formyltransferase from Shigella boydii serotype 4 (strain Sb227).